Consider the following 391-residue polypeptide: Rhizopuspepsin-2 (391 aa).

Positions 1-21 (MKLTLISSCVALAFMALATEA) are cleaved as a signal peptide. Positions 22 to 68 (APSGKKLSIPLTKNTNYKPSAKNAIQKALAKYHRFRTTSSSNSTSTE) are cleaved as a propeptide — activation peptide. The region spanning 84–388 (YYGKVTVGTP…NQEVPEVQIA (305 aa)) is the Peptidase A1 domain. Aspartate 102 is an active-site residue. Cysteine 115 and cysteine 118 are disulfide-bonded. Residue aspartate 285 is part of the active site. Cysteine 319 and cysteine 352 are oxidised to a cystine.

This sequence belongs to the peptidase A1 family.

The catalysed reaction is Hydrolysis of proteins with broad specificity similar to that of pepsin A, preferring hydrophobic residues at P1 and P1'. Clots milk and activates trypsinogen. Does not cleave 4-Gln-|-His-5, but does cleave 10-His-|-Leu-11 and 12-Val-|-Glu-13 in B chain of insulin.. The protein is Rhizopuspepsin-2 of Rhizopus niveus.